The sequence spans 1774 residues: Protein TIC 214 (1774 aa).

6 consecutive transmembrane segments (helical) span residues 19–39, 68–88, 91–111, 133–153, 176–196, and 227–247; these read IINSVVVVGLYYGFLTTFSIG, FIAGQLMMFISIYYAPLHLAL, PHTITVLALPYLLFHFFWNNH, VFLNNLIFQLFNHFILPSSML, VGWLIGHILFMKWVGLVLVWI, and IFSILLFITCVYYLGRIPSPI. Residues 254–268 show a composition bias toward basic and acidic residues; sequence GTSETEERGGTKQDQ. Residues 254–275 are disordered; that stretch reads GTSETEERGGTKQDQEVSTEEA.

Belongs to the TIC214 family. Part of the Tic complex.

It is found in the plastid. The protein resides in the chloroplast inner membrane. Its function is as follows. Involved in protein precursor import into chloroplasts. May be part of an intermediate translocation complex acting as a protein-conducting channel at the inner envelope. In Aethionema cordifolium (Lebanon stonecress), this protein is Protein TIC 214.